The following is a 475-amino-acid chain: E3 ubiquitin-protein ligase TRIM62 (475 aa).

Residues 11–54 form an RING-type zinc finger; that stretch reads CSICLSIYQDPVSLGCEHYFCRRCITEHWVRQEAQGARDCPECR. The B box-type zinc-finger motif lies at 88–128; it reads RAARPCQAHDKVKLFCLTDRALLCFFCDEPALHEQHQVTGI. Zn(2+) is bound by residues C93, H96, C114, and H120. A coiled-coil region spans residues 127–241; sequence GIDDAFDELQ…LQERLAETDR (115 aa). The B30.2/SPRY domain maps to 277–475; sequence PLQYTIWKSL…QPLRINTVRI (199 aa).

This sequence belongs to the TRIM/RBCC family. As to quaternary structure, interacts with the ubiquitin-conjugating enzyme, UBE2D2. Post-translationally, polyubiquitinated, autoubiquitinated in the presence of UBE2D2.

It localises to the cytoplasm. The enzyme catalyses S-ubiquitinyl-[E2 ubiquitin-conjugating enzyme]-L-cysteine + [acceptor protein]-L-lysine = [E2 ubiquitin-conjugating enzyme]-L-cysteine + N(6)-ubiquitinyl-[acceptor protein]-L-lysine.. It participates in protein modification; protein ubiquitination. E3 ubiquitin ligase that plays a role in antifungal immunity by mediating 'Lys-27'-linked ubiquitination of CARD9 downstream of C-type lectin receptors; leading to CARD9 activation, followed by activation of NF-kappa-B and MAP kinase p38 pathways. E3 ubiquitin ligase activity is dependent on E2 ubiquitin-conjugating enzyme UBE2D2. This chain is E3 ubiquitin-protein ligase TRIM62, found in Homo sapiens (Human).